The sequence spans 114 residues: Lymphotactin (114 aa).

Positions 1–21 (MRLLLLTFLGVCCLTPWVVEG) are cleaved as a signal peptide. Cys32 and Cys69 are disulfide-bonded. The disordered stretch occupies residues 92-114 (KNMAETVPTGAQRSTSTAITLTG). A compositionally biased stretch (polar residues) spans 100 to 114 (TGAQRSTSTAITLTG).

It belongs to the intercrine gamma family. In terms of tissue distribution, expressed in activated CD8(+) T cells. In the thymus, expressed by medullary thymic epithelial cells.

The protein localises to the secreted. Functionally, chemotactic activity for lymphocytes but not for monocytes or neutrophils. In thymus, mediates medullary accumulation of thymic dendritic cells and contributes to regulatoy T cell development, playing a role in self-tolerance establishment. This chain is Lymphotactin (Xcl1), found in Mus musculus (Mouse).